The sequence spans 251 residues: Imidazole glycerol phosphate synthase subunit HisF (251 aa).

Catalysis depends on residues aspartate 10 and aspartate 129.

Belongs to the HisA/HisF family. Heterodimer of HisH and HisF.

Its subcellular location is the cytoplasm. It carries out the reaction 5-[(5-phospho-1-deoxy-D-ribulos-1-ylimino)methylamino]-1-(5-phospho-beta-D-ribosyl)imidazole-4-carboxamide + L-glutamine = D-erythro-1-(imidazol-4-yl)glycerol 3-phosphate + 5-amino-1-(5-phospho-beta-D-ribosyl)imidazole-4-carboxamide + L-glutamate + H(+). It functions in the pathway amino-acid biosynthesis; L-histidine biosynthesis; L-histidine from 5-phospho-alpha-D-ribose 1-diphosphate: step 5/9. IGPS catalyzes the conversion of PRFAR and glutamine to IGP, AICAR and glutamate. The HisF subunit catalyzes the cyclization activity that produces IGP and AICAR from PRFAR using the ammonia provided by the HisH subunit. This chain is Imidazole glycerol phosphate synthase subunit HisF, found in Cutibacterium acnes (strain DSM 16379 / KPA171202) (Propionibacterium acnes).